Reading from the N-terminus, the 449-residue chain is 3-phosphoshikimate 1-carboxyvinyltransferase (449 aa).

Positions 28, 29, and 33 each coordinate 3-phosphoshikimate. Lys28 contacts phosphoenolpyruvate. The phosphoenolpyruvate site is built by Gly105 and Arg133. Residues Ser179, Gln181, Asp332, and Lys359 each coordinate 3-phosphoshikimate. Gln181 is a binding site for phosphoenolpyruvate. The active-site Proton acceptor is the Asp332. 2 residues coordinate phosphoenolpyruvate: Arg363 and Arg406.

It belongs to the EPSP synthase family. Monomer.

The protein resides in the cytoplasm. It carries out the reaction 3-phosphoshikimate + phosphoenolpyruvate = 5-O-(1-carboxyvinyl)-3-phosphoshikimate + phosphate. The protein operates within metabolic intermediate biosynthesis; chorismate biosynthesis; chorismate from D-erythrose 4-phosphate and phosphoenolpyruvate: step 6/7. Catalyzes the transfer of the enolpyruvyl moiety of phosphoenolpyruvate (PEP) to the 5-hydroxyl of shikimate-3-phosphate (S3P) to produce enolpyruvyl shikimate-3-phosphate and inorganic phosphate. The polypeptide is 3-phosphoshikimate 1-carboxyvinyltransferase (Nitrobacter winogradskyi (strain ATCC 25391 / DSM 10237 / CIP 104748 / NCIMB 11846 / Nb-255)).